We begin with the raw amino-acid sequence, 164 residues long: R-phycoerythrin alpha chain (164 aa).

Residues Cys-82 and Cys-139 each contribute to the (2R,3E)-phycoerythrobilin site.

It belongs to the phycobiliprotein family. As to quaternary structure, heterodimer of an alpha and a beta chain. Post-translationally, contains two covalently linked bilin chromophores.

The protein resides in the plastid. It localises to the chloroplast thylakoid membrane. Light-harvesting photosynthetic bile pigment-protein from the phycobiliprotein complex. In Pyropia tenera (Nori), this protein is R-phycoerythrin alpha chain (cpeA).